Reading from the N-terminus, the 907-residue chain is NADH-quinone oxidoreductase subunit G (907 aa).

The 83-residue stretch at 1 to 83 folds into the 2Fe-2S ferredoxin-type domain; that stretch reads MTIIFVDNEE…GMIVSTSDKI (83 aa). The [2Fe-2S] cluster site is built by Cys-34, Cys-45, Cys-48, and Cys-67. Positions 83 to 122 constitute a 4Fe-4S His(Cys)3-ligated-type domain; it reads ISRNFRKGIIELLMLNHPHDCPICEEGGSCHLQDMTVMAG. Positions 99, 103, 106, 112, 151, 154, 157, 201, 228, 231, 235, and 263 each coordinate [4Fe-4S] cluster. The 4Fe-4S Mo/W bis-MGD-type domain maps to 221-277; sequence MQYAPSICQHCCVGCNISVGEKYGKISRIENRYHNAINHYFLCDLGRFSYDYSNVDE.

The protein belongs to the complex I 75 kDa subunit family. In terms of assembly, composed of 13 different subunits. Subunits NuoCD, E, F, and G constitute the peripheral sector of the complex. Requires [2Fe-2S] cluster as cofactor. It depends on [4Fe-4S] cluster as a cofactor.

It carries out the reaction a quinone + NADH + 5 H(+)(in) = a quinol + NAD(+) + 4 H(+)(out). Its function is as follows. NDH-1 shuttles electrons from NADH, via FMN and iron-sulfur (Fe-S) centers, to quinones in the respiratory chain. Couples the redox reaction to proton translocation (for every two electrons transferred, four hydrogen ions are translocated across the cytoplasmic membrane), and thus conserves the redox energy in a proton gradient. In Buchnera aphidicola subsp. Baizongia pistaciae (strain Bp), this protein is NADH-quinone oxidoreductase subunit G (nuoG).